A 305-amino-acid chain; its full sequence is tRNA pseudouridine synthase B (305 aa).

D41 (nucleophile) is an active-site residue.

This sequence belongs to the pseudouridine synthase TruB family. Type 1 subfamily.

The enzyme catalyses uridine(55) in tRNA = pseudouridine(55) in tRNA. In terms of biological role, responsible for synthesis of pseudouridine from uracil-55 in the psi GC loop of transfer RNAs. The protein is tRNA pseudouridine synthase B of Prochlorococcus marinus (strain MIT 9301).